Here is a 133-residue protein sequence, read N- to C-terminus: Putative pre-16S rRNA nuclease (133 aa).

The protein belongs to the YqgF nuclease family.

Its subcellular location is the cytoplasm. Functionally, could be a nuclease involved in processing of the 5'-end of pre-16S rRNA. This Bordetella bronchiseptica (strain ATCC BAA-588 / NCTC 13252 / RB50) (Alcaligenes bronchisepticus) protein is Putative pre-16S rRNA nuclease.